The following is a 324-amino-acid chain: Elongation factor P--(R)-beta-lysine ligase (324 aa).

A substrate-binding site is contributed by 75-77 (SPE). ATP is bound by residues 99–101 (RNE) and N108. Y117 serves as a coordination point for substrate. 243-244 (EL) contacts ATP. E250 contacts substrate. G299 contributes to the ATP binding site.

It belongs to the class-II aminoacyl-tRNA synthetase family. EpmA subfamily. Homodimer.

The catalysed reaction is D-beta-lysine + L-lysyl-[protein] + ATP = N(6)-((3R)-3,6-diaminohexanoyl)-L-lysyl-[protein] + AMP + diphosphate + H(+). Functionally, with EpmB is involved in the beta-lysylation step of the post-translational modification of translation elongation factor P (EF-P). Catalyzes the ATP-dependent activation of (R)-beta-lysine produced by EpmB, forming a lysyl-adenylate, from which the beta-lysyl moiety is then transferred to the epsilon-amino group of a conserved specific lysine residue in EF-P. This is Elongation factor P--(R)-beta-lysine ligase from Pseudoalteromonas translucida (strain TAC 125).